Consider the following 396-residue polypeptide: Protein DDI1 homolog 1 (396 aa).

In terms of domain architecture, Ubiquitin-like spans 1 to 81 (MLITVYCVRR…VVLLQKDNVG (81 aa)). The interval 82 to 130 (PRAPGRAPNQPRVDFSGIAVPGTSSSRPQHPGQQQQRTPAAQRSQGLAS) is disordered. Residues 103–128 (GTSSSRPQHPGQQQQRTPAAQRSQGL) are compositionally biased toward polar residues. The active site involves aspartate 260. The segment at 374–396 (SGQDESSDKEITHSVMDSGRKEH) is disordered. The segment covering 379–396 (SSDKEITHSVMDSGRKEH) has biased composition (basic and acidic residues).

The protein belongs to the DDI1 family.

With respect to regulation, inhibited by the proteinase inhibitors amprenavir, indinavir, lopinavir, isovaleryl pepstatin, ritonavir and saquinavir. Probable aspartic protease. Seems to act as a proteasomal shuttle which links the proteasome and replication fork proteins like RTF2. Required, with DDI2, for cellular survival following replication stress. Together or redudantly with DDI2, removes RTF2 from stalled forks to allow cell cycle progression after replication stress and maintains genome integrity. In Homo sapiens (Human), this protein is Protein DDI1 homolog 1 (DDI1).